The primary structure comprises 245 residues: Probable phosphatase YcdX (245 aa).

Zn(2+) is bound by residues H7, H9, H15, H40, E73, H101, H131, D192, and H194.

This sequence belongs to the PHP family. Homotrimer. Zn(2+) is required as a cofactor.

The sequence is that of Probable phosphatase YcdX from Shigella flexneri serotype 5b (strain 8401).